The following is a 458-amino-acid chain: Probable alpha-L-glutamate ligase (458 aa).

The unknown stretch occupies residues 1–162; that stretch reads MSDNKFIIGS…YGVKTAKKSG (162 aa). The tract at residues 163 to 458 is alpha-L-glutamate ligase; the sequence is LKIGLLASNP…IEKKLGWKAD (296 aa). One can recognise an ATP-grasp domain in the interval 267-450; the sequence is LQLLQKNNLD…IAGAMIESIE (184 aa). ATP is bound by residues Lys304, 341 to 342, Asp350, and 374 to 376; these read EF and RAN. 3 residues coordinate Mg(2+): Asp411, Glu423, and Asn425. Mn(2+)-binding residues include Asp411, Glu423, and Asn425.

In the C-terminal section; belongs to the RimK family. Requires Mg(2+) as cofactor. The cofactor is Mn(2+).

The protein is Probable alpha-L-glutamate ligase of Shewanella pealeana (strain ATCC 700345 / ANG-SQ1).